A 348-amino-acid chain; its full sequence is ELAV-like protein 3 (348 aa).

3 consecutive RRM domains span residues 34–112 (TNLI…YARP), 120–200 (ANLY…FANN), and 265–343 (WCIF…FKTS).

It belongs to the RRM elav family. As to expression, expression is neural-specific in both embryos and adults. Expressed from neurula stage onwards in primary motor-, inter- and sensory-neurons. Expressed in the closing neural tube and motor neurons of stage 18 embryos, and primarily in the ventricular zone and dorsal region of the tailbud and adult brain. Expressed from stage 26 onwards in the differentiating ganglion cell layer of the retina, extending to the inner nuclear layer at later stages.

Its function is as follows. RNA-binding protein that binds to AU-rich element (ARE) sequences of target mRNAs. May also bind poly-A tracts via RRM 3. May be involved in neuronal differentiation and maintenance. The chain is ELAV-like protein 3 (elavl3) from Xenopus laevis (African clawed frog).